The primary structure comprises 119 residues: UPF0102 protein Sare_1228 (119 aa).

It belongs to the UPF0102 family.

The polypeptide is UPF0102 protein Sare_1228 (Salinispora arenicola (strain CNS-205)).